Here is a 210-residue protein sequence, read N- to C-terminus: Large ribosomal subunit protein uL3 (210 aa).

Positions 139–165 (AEKVHRSPGSIGHATFPGKVFKGKKMP) are disordered.

This sequence belongs to the universal ribosomal protein uL3 family. In terms of assembly, part of the 50S ribosomal subunit. Forms a cluster with proteins L14 and L19.

Its function is as follows. One of the primary rRNA binding proteins, it binds directly near the 3'-end of the 23S rRNA, where it nucleates assembly of the 50S subunit. The chain is Large ribosomal subunit protein uL3 from Maridesulfovibrio salexigens (strain ATCC 14822 / DSM 2638 / NCIMB 8403 / VKM B-1763) (Desulfovibrio salexigens).